Here is a 540-residue protein sequence, read N- to C-terminus: Chaperonin GroEL (540 aa).

ATP-binding positions include 29-32, 86-90, G413, 476-478, and D492; these read TLGP, DGTTT, and NAA.

Belongs to the chaperonin (HSP60) family. As to quaternary structure, forms a cylinder of 14 subunits composed of two heptameric rings stacked back-to-back. Interacts with the co-chaperonin GroES.

The protein localises to the cytoplasm. The enzyme catalyses ATP + H2O + a folded polypeptide = ADP + phosphate + an unfolded polypeptide.. In terms of biological role, together with its co-chaperonin GroES, plays an essential role in assisting protein folding. The GroEL-GroES system forms a nano-cage that allows encapsulation of the non-native substrate proteins and provides a physical environment optimized to promote and accelerate protein folding. This Streptococcus gordonii protein is Chaperonin GroEL.